A 172-amino-acid chain; its full sequence is uncharacterized protein (172 aa).

Basic and acidic residues predominate over residues 1 to 17; that stretch reads MISLDKDENEIEHHNEE. The disordered stretch occupies residues 1 to 27; the sequence is MISLDKDENEIEHHNEENSLVEQETAP. Residues 129-151 form a helical membrane-spanning segment; that stretch reads IVTVLIGIIVAIFVLVVIGIAAF.

The protein resides in the membrane. This is an uncharacterized protein from Bacillus subtilis (strain 168).